Consider the following 418-residue polypeptide: Gamma-glutamyl phosphate reductase (418 aa).

It belongs to the gamma-glutamyl phosphate reductase family.

It localises to the cytoplasm. The enzyme catalyses L-glutamate 5-semialdehyde + phosphate + NADP(+) = L-glutamyl 5-phosphate + NADPH + H(+). Its pathway is amino-acid biosynthesis; L-proline biosynthesis; L-glutamate 5-semialdehyde from L-glutamate: step 2/2. Functionally, catalyzes the NADPH-dependent reduction of L-glutamate 5-phosphate into L-glutamate 5-semialdehyde and phosphate. The product spontaneously undergoes cyclization to form 1-pyrroline-5-carboxylate. The chain is Gamma-glutamyl phosphate reductase from Geobacter metallireducens (strain ATCC 53774 / DSM 7210 / GS-15).